The primary structure comprises 118 residues: Protein RALF-like 24 (118 aa).

An N-terminal signal peptide occupies residues 1 to 22 (MSRSLALVYLSLLCLQTHLSIS). Residues 23 to 63 (VTVPIPSVNGEIDAMLNRNGVIGEEEGEEMMPSEISRRVMM) constitute a propeptide, removed in mature form. Disulfide bonds link Cys-81-Cys-91 and Cys-103-Cys-109.

Belongs to the plant rapid alkalinization factor (RALF) family. In terms of processing, proteolytically cleaved, probably by S1P, a subtilisin-like serine protease (subtilase).

The protein resides in the secreted. In terms of biological role, cell signaling peptide that may regulate plant stress, growth, and development. Mediates a rapid alkalinization of extracellular space by mediating a transient increase in the cytoplasmic Ca(2+) concentration leading to a calcium-dependent signaling events through a cell surface receptor and a concomitant activation of some intracellular mitogen-activated protein kinases. The protein is Protein RALF-like 24 (RALFL24) of Arabidopsis thaliana (Mouse-ear cress).